The primary structure comprises 677 residues: DNA polymerase epsilon subunit B (677 aa).

This sequence belongs to the DNA polymerase epsilon subunit B family. Heterotetramer. Consists of four subunits: POL2, DPB2, DPB3 and DPB4.

The protein resides in the nucleus. Its function is as follows. As accessory component of the DNA polymerase epsilon (DNA polymerase II) participates in chromosomal DNA replication. This chain is DNA polymerase epsilon subunit B (DPB2), found in Eremothecium gossypii (strain ATCC 10895 / CBS 109.51 / FGSC 9923 / NRRL Y-1056) (Yeast).